The chain runs to 434 residues: Enolase (434 aa).

Position 163 (glutamine 163) interacts with (2R)-2-phosphoglycerate. The active-site Proton donor is the glutamate 205. Mg(2+) is bound by residues aspartate 242, glutamate 291, and aspartate 318. The (2R)-2-phosphoglycerate site is built by lysine 343, arginine 372, serine 373, and lysine 394. Lysine 343 (proton acceptor) is an active-site residue.

This sequence belongs to the enolase family. The cofactor is Mg(2+).

The protein resides in the cytoplasm. It is found in the secreted. Its subcellular location is the cell surface. The catalysed reaction is (2R)-2-phosphoglycerate = phosphoenolpyruvate + H2O. The protein operates within carbohydrate degradation; glycolysis; pyruvate from D-glyceraldehyde 3-phosphate: step 4/5. Catalyzes the reversible conversion of 2-phosphoglycerate (2-PG) into phosphoenolpyruvate (PEP). It is essential for the degradation of carbohydrates via glycolysis. The sequence is that of Enolase from Streptococcus sanguinis (strain SK36).